The primary structure comprises 446 residues: Probable glucuronosyltransferase Os04g0650300 (446 aa).

Topologically, residues 1-30 are cytoplasmic; that stretch reads MKLPLLRPLWPMLSPAAGSPDSPPEPSKPS. Residues 31 to 51 traverse the membrane as a helical; Signal-anchor for type II membrane protein segment; the sequence is LPAAWLLLHALFCATSMAVGF. The Lumenal portion of the chain corresponds to 52-446; sequence RFSRLIVYLL…TTLLNTEGQH (395 aa). A glycan (N-linked (GlcNAc...) asparagine) is linked at asparagine 87. Residues 425–446 are disordered; the sequence is QQDAKPETPLKRTTLLNTEGQH.

It belongs to the glycosyltransferase 43 family.

It localises to the golgi apparatus membrane. In terms of biological role, involved in the synthesis of glucuronoxylan hemicellulose in secondary cell walls. This chain is Probable glucuronosyltransferase Os04g0650300, found in Oryza sativa subsp. japonica (Rice).